The chain runs to 80 residues: MIMDDVKATVLSILQDLTGEDVSNNMDANLFDEGILDSMGSVQLLLELQNQLGIEVPVSEFERSEWETPAKIVAKVASLQ.

Residues 1–80 (MIMDDVKATV…KIVAKVASLQ (80 aa)) enclose the Carrier domain. The residue at position 38 (serine 38) is an O-(pantetheine 4'-phosphoryl)serine.

The protein belongs to the DltC family. 4'-phosphopantetheine is transferred from CoA to a specific serine of apo-DCP.

Its subcellular location is the cytoplasm. It participates in cell wall biogenesis; lipoteichoic acid biosynthesis. In terms of biological role, carrier protein involved in the D-alanylation of lipoteichoic acid (LTA). The loading of thioester-linked D-alanine onto DltC is catalyzed by D-alanine--D-alanyl carrier protein ligase DltA. The DltC-carried D-alanyl group is further transferred to cell membrane phosphatidylglycerol (PG) by forming an ester bond, probably catalyzed by DltD. D-alanylation of LTA plays an important role in modulating the properties of the cell wall in Gram-positive bacteria, influencing the net charge of the cell wall. This Lactiplantibacillus plantarum (strain ATCC BAA-793 / NCIMB 8826 / WCFS1) (Lactobacillus plantarum) protein is D-alanyl carrier protein 2.